Reading from the N-terminus, the 165-residue chain is Chorismate pyruvate-lyase (165 aa).

Substrate-binding residues include M35, R77, L115, and E156.

The protein belongs to the UbiC family. In terms of assembly, monomer.

The protein localises to the cytoplasm. The enzyme catalyses chorismate = 4-hydroxybenzoate + pyruvate. It functions in the pathway cofactor biosynthesis; ubiquinone biosynthesis. Removes the pyruvyl group from chorismate, with concomitant aromatization of the ring, to provide 4-hydroxybenzoate (4HB) for the ubiquinone pathway. In Salmonella arizonae (strain ATCC BAA-731 / CDC346-86 / RSK2980), this protein is Chorismate pyruvate-lyase.